A 505-amino-acid chain; its full sequence is Amidophosphoribosyltransferase (505 aa).

The Nucleophile role is filled by cysteine 2. In terms of domain architecture, Glutamine amidotransferase type-2 spans 2–235; sequence CGIVGIVSQS…AGEAVYVTFD (234 aa). 3 residues coordinate Mg(2+): threonine 306, aspartate 368, and aspartate 369. The segment at 484–505 is disordered; the sequence is RNDNAKKKREKQASNLEIYNEQ. A compositionally biased stretch (polar residues) spans 496-505; the sequence is ASNLEIYNEQ.

The protein in the C-terminal section; belongs to the purine/pyrimidine phosphoribosyltransferase family. Mg(2+) serves as cofactor.

It catalyses the reaction 5-phospho-beta-D-ribosylamine + L-glutamate + diphosphate = 5-phospho-alpha-D-ribose 1-diphosphate + L-glutamine + H2O. The protein operates within purine metabolism; IMP biosynthesis via de novo pathway; N(1)-(5-phospho-D-ribosyl)glycinamide from 5-phospho-alpha-D-ribose 1-diphosphate: step 1/2. Its function is as follows. Catalyzes the formation of phosphoribosylamine from phosphoribosylpyrophosphate (PRPP) and glutamine. This Haemophilus influenzae (strain ATCC 51907 / DSM 11121 / KW20 / Rd) protein is Amidophosphoribosyltransferase.